A 105-amino-acid chain; its full sequence is Iron-sulfur cluster assembly protein CyaY (105 aa).

Belongs to the frataxin family.

In terms of biological role, involved in iron-sulfur (Fe-S) cluster assembly. May act as a regulator of Fe-S biogenesis. This is Iron-sulfur cluster assembly protein CyaY from Psychromonas ingrahamii (strain DSM 17664 / CCUG 51855 / 37).